Consider the following 715-residue polypeptide: Polyribonucleotide nucleotidyltransferase (715 aa).

Residues D485 and D491 each coordinate Mg(2+). The region spanning 552–611 is the KH domain; that stretch reads PRIHTMKIDPKKIKDVIGKGGAVIRALTEETGTSIDIDDDGTVKIAATDNNAAKAVMARI. Positions 621–689 constitute an S1 motif domain; that stretch reads NAIYKGKVTR…RQNRIRLTMK (69 aa). The disordered stretch occupies residues 695 to 715; the sequence is TPVAENVTEEAEVSSEQQAEI.

Belongs to the polyribonucleotide nucleotidyltransferase family. As to quaternary structure, component of the RNA degradosome, which is a multiprotein complex involved in RNA processing and mRNA degradation. Mg(2+) is required as a cofactor.

The protein localises to the cytoplasm. It carries out the reaction RNA(n+1) + phosphate = RNA(n) + a ribonucleoside 5'-diphosphate. Functionally, involved in mRNA degradation. Catalyzes the phosphorolysis of single-stranded polyribonucleotides processively in the 3'- to 5'-direction. The sequence is that of Polyribonucleotide nucleotidyltransferase from Actinobacillus pleuropneumoniae serotype 3 (strain JL03).